Reading from the N-terminus, the 604-residue chain is Nuclear cap-binding protein subunit 3 (604 aa).

Positions methionine 1–glutamate 36 are disordered. The interval aspartate 116–proline 177 is RNA recognition motif (RRM) domain. The short motif at tryptophan 145–aspartate 148 is the WLDD motif; essential for 7-methylguanosine-containing mRNA cap binding element. Disordered stretches follow at residues methionine 168 to leucine 219, lysine 319 to glutamate 383, and glutamine 457 to serine 604. A compositionally biased stretch (basic and acidic residues) spans aspartate 173 to glutamate 198. 2 stretches are compositionally biased toward acidic residues: residues serine 199–leucine 219 and glutamate 331–aspartate 349. Basic and acidic residues predominate over residues arginine 350–alanine 370. A compositionally biased stretch (polar residues) spans asparagine 458–valine 469. Composition is skewed to basic and acidic residues over residues proline 495–serine 505, threonine 539–glutamate 548, and isoleucine 569–leucine 582. Positions glutamate 595 to serine 604 are enriched in low complexity.

This sequence belongs to the NCBP3 family. In terms of assembly, component of an alternative cap-binding complex (CBC) composed of NCBP1/CBP80 and NCBP3.

The protein resides in the nucleus. It localises to the cytoplasm. Its function is as follows. Associates with NCBP1/CBP80 to form an alternative cap-binding complex (CBC) which plays a key role in mRNA export. NCBP3 serves as adapter protein linking the capped RNAs (m7GpppG-capped RNA) to NCBP1/CBP80. Unlike the conventional CBC with NCBP2 which binds both small nuclear RNA (snRNA) and messenger (mRNA) and is involved in their export from the nucleus, the alternative CBC with NCBP3 does not bind snRNA and associates only with mRNA thereby playing a role in only mRNA export. The sequence is that of Nuclear cap-binding protein subunit 3 from Gallus gallus (Chicken).